The sequence spans 178 residues: Large ribosomal subunit protein uL16 (178 aa).

Belongs to the universal ribosomal protein uL16 family.

This is Large ribosomal subunit protein uL16 from Saccharolobus solfataricus (strain ATCC 35092 / DSM 1617 / JCM 11322 / P2) (Sulfolobus solfataricus).